A 1075-amino-acid polypeptide reads, in one-letter code: Carbamoyl phosphate synthase large chain (1075 aa).

Residues 2–403 (PKRTDIKSIL…SLQKALRGLE (402 aa)) are carboxyphosphate synthetic domain. The ATP site is built by arginine 129, arginine 169, glycine 175, glycine 176, glutamate 208, leucine 210, glutamate 215, glycine 241, isoleucine 242, histidine 243, glutamine 285, and glutamate 299. The ATP-grasp 1 domain occupies 133-328 (DIAMKKIGLD…IAKVAAKLAV (196 aa)). Mg(2+)-binding residues include glutamine 285, glutamate 299, and asparagine 301. Glutamine 285, glutamate 299, and asparagine 301 together coordinate Mn(2+). Residues 404 to 553 (VGATGFDPKV…YSTYEDECEA (150 aa)) form an oligomerization domain region. The segment at 554-936 (NPSIDRDKIM…AFAKAQLGSN (383 aa)) is carbamoyl phosphate synthetic domain. The ATP-grasp 2 domain occupies 679–870 (QHAVDRLKLK…LAKVAARVMA (192 aa)). Positions 715, 754, 756, 761, 786, 787, 788, 789, 829, and 841 each coordinate ATP. Residues glutamine 829, glutamate 841, and asparagine 843 each contribute to the Mg(2+) site. Mn(2+) contacts are provided by glutamine 829, glutamate 841, and asparagine 843. In terms of domain architecture, MGS-like spans 937-1075 (STMKKQGRAL…QEMHAQIKKS (139 aa)). An allosteric domain region spans residues 937–1075 (STMKKQGRAL…QEMHAQIKKS (139 aa)).

This sequence belongs to the CarB family. As to quaternary structure, composed of two chains; the small (or glutamine) chain promotes the hydrolysis of glutamine to ammonia, which is used by the large (or ammonia) chain to synthesize carbamoyl phosphate. Tetramer of heterodimers (alpha,beta)4. Mg(2+) serves as cofactor. Requires Mn(2+) as cofactor.

The enzyme catalyses hydrogencarbonate + L-glutamine + 2 ATP + H2O = carbamoyl phosphate + L-glutamate + 2 ADP + phosphate + 2 H(+). The catalysed reaction is hydrogencarbonate + NH4(+) + 2 ATP = carbamoyl phosphate + 2 ADP + phosphate + 2 H(+). The protein operates within amino-acid biosynthesis; L-arginine biosynthesis; carbamoyl phosphate from bicarbonate: step 1/1. Its pathway is pyrimidine metabolism; UMP biosynthesis via de novo pathway; (S)-dihydroorotate from bicarbonate: step 1/3. Large subunit of the glutamine-dependent carbamoyl phosphate synthetase (CPSase). CPSase catalyzes the formation of carbamoyl phosphate from the ammonia moiety of glutamine, carbonate, and phosphate donated by ATP, constituting the first step of 2 biosynthetic pathways, one leading to arginine and/or urea and the other to pyrimidine nucleotides. The large subunit (synthetase) binds the substrates ammonia (free or transferred from glutamine from the small subunit), hydrogencarbonate and ATP and carries out an ATP-coupled ligase reaction, activating hydrogencarbonate by forming carboxy phosphate which reacts with ammonia to form carbamoyl phosphate. The protein is Carbamoyl phosphate synthase large chain of Salmonella typhimurium (strain LT2 / SGSC1412 / ATCC 700720).